The chain runs to 356 residues: Holliday junction branch migration complex subunit RuvB (356 aa).

Residues 4–190 (TDKLAAERII…FGIVARLEFY (187 aa)) are large ATPase domain (RuvB-L). ATP contacts are provided by residues Leu29, Arg30, Gly71, Lys74, Thr75, Thr76, 137–139 (EDY), Arg180, Tyr190, and Arg227. Residue Thr75 participates in Mg(2+) binding. The small ATPAse domain (RuvB-S) stretch occupies residues 191-261 (DAEQLSRIVR…VADAALAMLD (71 aa)). The head domain (RuvB-H) stretch occupies residues 264 to 356 (PVGFDLMDRK…NLWDTPDAER (93 aa)). Arg300, Arg319, and Arg324 together coordinate DNA.

Belongs to the RuvB family. Homohexamer. Forms an RuvA(8)-RuvB(12)-Holliday junction (HJ) complex. HJ DNA is sandwiched between 2 RuvA tetramers; dsDNA enters through RuvA and exits via RuvB. An RuvB hexamer assembles on each DNA strand where it exits the tetramer. Each RuvB hexamer is contacted by two RuvA subunits (via domain III) on 2 adjacent RuvB subunits; this complex drives branch migration. In the full resolvosome a probable DNA-RuvA(4)-RuvB(12)-RuvC(2) complex forms which resolves the HJ.

It localises to the cytoplasm. It carries out the reaction ATP + H2O = ADP + phosphate + H(+). In terms of biological role, the RuvA-RuvB-RuvC complex processes Holliday junction (HJ) DNA during genetic recombination and DNA repair, while the RuvA-RuvB complex plays an important role in the rescue of blocked DNA replication forks via replication fork reversal (RFR). RuvA specifically binds to HJ cruciform DNA, conferring on it an open structure. The RuvB hexamer acts as an ATP-dependent pump, pulling dsDNA into and through the RuvAB complex. RuvB forms 2 homohexamers on either side of HJ DNA bound by 1 or 2 RuvA tetramers; 4 subunits per hexamer contact DNA at a time. Coordinated motions by a converter formed by DNA-disengaged RuvB subunits stimulates ATP hydrolysis and nucleotide exchange. Immobilization of the converter enables RuvB to convert the ATP-contained energy into a lever motion, pulling 2 nucleotides of DNA out of the RuvA tetramer per ATP hydrolyzed, thus driving DNA branch migration. The RuvB motors rotate together with the DNA substrate, which together with the progressing nucleotide cycle form the mechanistic basis for DNA recombination by continuous HJ branch migration. Branch migration allows RuvC to scan DNA until it finds its consensus sequence, where it cleaves and resolves cruciform DNA. In Burkholderia thailandensis (strain ATCC 700388 / DSM 13276 / CCUG 48851 / CIP 106301 / E264), this protein is Holliday junction branch migration complex subunit RuvB.